Consider the following 540-residue polypeptide: PTS system alpha-glucoside-specific EIICB component (540 aa).

One can recognise a PTS EIIC type-1 domain in the interval 1–420 (MLSQIQRFGG…LNLKTPGREE (420 aa)). A run of 11 helical transmembrane segments spans residues 12-32 (MFTP…AIML), 87-107 (ACLA…AMGM), 130-150 (IAGI…SGLV), 174-194 (FVVI…LLGW), 201-221 (IESL…VYIF), 225-245 (ILIP…GPAV), 277-297 (FALH…ALYF), 307-327 (VAGL…TEPL), 329-349 (FTFL…AATM), 352-372 (VMYI…QFLP), and 384-404 (SMMF…FVVF). A PTS EIIB type-1 domain is found at 448-530 (LGQAAGFLQA…ENLMKDSLST (83 aa)). Cys-470 (phosphocysteine intermediate; for EIIB activity) is an active-site residue.

It localises to the cell membrane. Functionally, the phosphoenolpyruvate-dependent sugar phosphotransferase system (sugar PTS), a major carbohydrate active -transport system, catalyzes the phosphorylation of incoming sugar substrates concomitantly with their translocation across the cell membrane. This system is involved in alpha-glucoside transport. Its function is as follows. Involved in the transport and simultaneous phosphorylation at O-6 of the glucosyl moiety of sucrose and its five linkage-isomeric alpha-D-glucosyl-D-fructoses. Can also transport maltose, isomaltose and maltitol, phosphorylating at O-6 of their non-reducing glucose portion. This Klebsiella pneumoniae protein is PTS system alpha-glucoside-specific EIICB component (aglA).